The following is a 188-amino-acid chain: Elongation factor P (188 aa).

Belongs to the elongation factor P family.

The protein resides in the cytoplasm. Its pathway is protein biosynthesis; polypeptide chain elongation. Its function is as follows. Involved in peptide bond synthesis. Stimulates efficient translation and peptide-bond synthesis on native or reconstituted 70S ribosomes in vitro. Probably functions indirectly by altering the affinity of the ribosome for aminoacyl-tRNA, thus increasing their reactivity as acceptors for peptidyl transferase. The protein is Elongation factor P of Gluconacetobacter diazotrophicus (strain ATCC 49037 / DSM 5601 / CCUG 37298 / CIP 103539 / LMG 7603 / PAl5).